The following is a 130-amino-acid chain: Small ribosomal subunit protein uS11 (130 aa).

This sequence belongs to the universal ribosomal protein uS11 family. In terms of assembly, part of the 30S ribosomal subunit. Interacts with proteins S7 and S18. Binds to IF-3.

In terms of biological role, located on the platform of the 30S subunit, it bridges several disparate RNA helices of the 16S rRNA. Forms part of the Shine-Dalgarno cleft in the 70S ribosome. This Blochmanniella floridana protein is Small ribosomal subunit protein uS11.